A 206-amino-acid chain; its full sequence is dCTP deaminase, dUMP-forming (206 aa).

Residues 117–122, Asp135, 143–145, Gln163, Tyr177, Lys184, and Gln188 contribute to the dCTP site; these read RSSFGR and TLE. The active-site Proton donor/acceptor is the Glu145.

The protein belongs to the dCTP deaminase family. In terms of assembly, homotrimer.

The enzyme catalyses dCTP + 2 H2O = dUMP + NH4(+) + diphosphate. It functions in the pathway pyrimidine metabolism; dUMP biosynthesis; dUMP from dCTP: step 1/1. Its function is as follows. Bifunctional enzyme that catalyzes both the deamination of dCTP to dUTP and the hydrolysis of dUTP to dUMP without releasing the toxic dUTP intermediate. The sequence is that of dCTP deaminase, dUMP-forming from Methanococcus vannielii (strain ATCC 35089 / DSM 1224 / JCM 13029 / OCM 148 / SB).